Reading from the N-terminus, the 207-residue chain is dITP/XTP pyrophosphatase (207 aa).

11–16 (TGNPGK) provides a ligand contact to substrate. Asp-72 serves as the catalytic Proton acceptor. Asp-72 is a Mg(2+) binding site. Residues Ser-73, 154-157 (FGYD), Lys-177, and 182-183 (HR) each bind substrate.

The protein belongs to the HAM1 NTPase family. As to quaternary structure, homodimer. Requires Mg(2+) as cofactor.

The catalysed reaction is XTP + H2O = XMP + diphosphate + H(+). It carries out the reaction dITP + H2O = dIMP + diphosphate + H(+). It catalyses the reaction ITP + H2O = IMP + diphosphate + H(+). Its function is as follows. Pyrophosphatase that catalyzes the hydrolysis of nucleoside triphosphates to their monophosphate derivatives, with a high preference for the non-canonical purine nucleotides XTP (xanthosine triphosphate), dITP (deoxyinosine triphosphate) and ITP. Seems to function as a house-cleaning enzyme that removes non-canonical purine nucleotides from the nucleotide pool, thus preventing their incorporation into DNA/RNA and avoiding chromosomal lesions. The chain is dITP/XTP pyrophosphatase from Thermus thermophilus (strain ATCC 27634 / DSM 579 / HB8).